Here is a 794-residue protein sequence, read N- to C-terminus: Protein transport protein SEC23 G (794 aa).

Positions 56, 59, 78, and 81 each coordinate Zn(2+). The segment at 56 to 81 is zinc finger-like; it reads CSRCGAVLNPYARVDYQSRIWSCPFC.

Belongs to the SEC23/SEC24 family. SEC23 subfamily. As to quaternary structure, component of the coat protein complex II (COPII), composed of at least five proteins: the Sec23/24 complex, the Sec13/31 complex and Sar1. Interacts with SEC24A.

The protein resides in the cytoplasmic vesicle. The protein localises to the COPII-coated vesicle membrane. Its subcellular location is the endoplasmic reticulum membrane. It localises to the membrane. In terms of biological role, component of the coat protein complex II (COPII) which promotes the formation of transport vesicles from the endoplasmic reticulum (ER). The coat has two main functions, the physical deformation of the endoplasmic reticulum membrane into vesicles and the selection of cargo molecules. This chain is Protein transport protein SEC23 G, found in Arabidopsis thaliana (Mouse-ear cress).